Consider the following 108-residue polypeptide: Small ribosomal subunit protein bS6 (108 aa).

Belongs to the bacterial ribosomal protein bS6 family.

Its function is as follows. Binds together with bS18 to 16S ribosomal RNA. The chain is Small ribosomal subunit protein bS6 from Nostoc sp. (strain PCC 7120 / SAG 25.82 / UTEX 2576).